The sequence spans 581 residues: Frizzled-3 (581 aa).

The first 19 residues, 1–19 (MYAASILILHLTWAVATIA), serve as a signal peptide directing secretion. Over 20 to 237 (ANGAGHNGPV…TSSQKKTSET (218 aa)) the chain is Extracellular. In terms of domain architecture, FZ spans 35-156 (PNGLQCQPIA…PEKHELCMQI (122 aa)). Intrachain disulfides connect Cys40-Cys101, Cys48-Cys94, Cys85-Cys123, Cys112-Cys153, and Cys116-Cys141. Asn54 carries N-linked (GlcNAc...) asparagine glycosylation. Residue Asn206 is glycosylated (N-linked (GlcNAc...) asparagine). A helical transmembrane segment spans residues 238–258 (LILGLSAVCFVLTLFALVTFW). At 259–270 (AEPTRFGYPERP) the chain is on the cytoplasmic side. Residues 271–291 (VLFLCLCYNLFSVCYLERIVF) form a helical membrane-spanning segment. At 292–321 (HNQARMHDVELQGRLMRPGCLLTPPCLASY) the chain is on the extracellular side. Residues 322–342 (ITTSYLSLCAASWWLIFALCF) form a helical membrane-spanning segment. At 343–359 (YLSSHKKWSSEALEKRS) the chain is on the cytoplasmic side. Residues 360–380 (GLFHVLAWVPPLAPPIAALLL) form a helical membrane-spanning segment. At 381 to 393 (EKVRPSELTGMCY) the chain is on the extracellular side. A helical membrane pass occupies residues 394-414 (APGFVELPALVLLLLGLYFTL). Residues 415 to 442 (RASRSLLSLQQQLQPTLAHHRFGQIRKR) are Cytoplasmic-facing. The helical transmembrane segment at 443 to 463 (FVLFSLLYFAPTTAGVVAALC) threads the bilayer. The Extracellular portion of the chain corresponds to 464–488 (ERYADSVPSCSTPDDCLSPTPLSAW). The chain crosses the membrane as a helical span at residues 489 to 509 (PALVRIFFQLVGGTLTGLWVW). At 510–581 (SRKTCESYRN…PVYNPNQSRV (72 aa)) the chain is on the cytoplasmic side. A PDZ-binding motif is present at residues 579–581 (SRV).

The protein belongs to the G-protein coupled receptor Fz/Smo family. As to expression, wing, leg and eye imaginal disks. In embryos, expressed is seen in brain, proventriculus, Malpighian tubules, anal plate and visceral mesoderm of parasegment 8.

Its subcellular location is the membrane. Receptor for Wnt proteins. Most of frizzled receptors are coupled to the beta-catenin canonical signaling pathway, which leads to the activation of disheveled proteins, inhibition of GSK-3 kinase, nuclear accumulation of beta-catenin and activation of Wnt target genes. A second signaling pathway involving PKC and calcium fluxes has been seen for some family members, but it is not yet clear if it represents a distinct pathway or if it can be integrated in the canonical pathway, as PKC seems to be required for Wnt-mediated inactivation of GSK-3 kinase. Both pathways seem to involve interactions with G-proteins. Required to coordinate the cytoskeletons of epidermal cells to produce a parallel array of cuticular hairs and bristles. This is Frizzled-3 (fz3) from Drosophila melanogaster (Fruit fly).